We begin with the raw amino-acid sequence, 129 residues long: MSNVPAELKYSKEHEWLRKEADGTYTVGITEHAQELLGDMVFVDLPEVGATVSAGDDCAVAESVKAASDIYAPVSGEIVEVNDALSDSPELVNSEPYAGGWIFKIKASDESELESLLDATAYEALLEDE.

The Lipoyl-binding domain maps to 24 to 106 (TYTVGITEHA…YAGGWIFKIK (83 aa)). N6-lipoyllysine is present on K65.

Belongs to the GcvH family. In terms of assembly, the glycine cleavage system is composed of four proteins: P, T, L and H. (R)-lipoate is required as a cofactor.

Its function is as follows. The glycine cleavage system catalyzes the degradation of glycine. The H protein shuttles the methylamine group of glycine from the P protein to the T protein. The sequence is that of Glycine cleavage system H protein from Escherichia coli O7:K1 (strain IAI39 / ExPEC).